Reading from the N-terminus, the 301-residue chain is Probable enoyl-CoA hydratase 2, mitochondrial (301 aa).

The N-terminal 32 residues, 1–32 (MSFVKYLRRDNLLQLAGKPSLSRNYILQTCRT), are a transit peptide targeting the mitochondrion. Substrate contacts are provided by residues 105–109 (AGADL) and Gly-152.

Belongs to the enoyl-CoA hydratase/isomerase family.

It is found in the mitochondrion. It carries out the reaction a (3S)-3-hydroxyacyl-CoA = a (2E)-enoyl-CoA + H2O. It catalyses the reaction a 4-saturated-(3S)-3-hydroxyacyl-CoA = a (3E)-enoyl-CoA + H2O. The protein operates within lipid metabolism; fatty acid beta-oxidation. Straight-chain enoyl-CoA thioesters from C4 up to at least C16 are processed, although with decreasing catalytic rate. The chain is Probable enoyl-CoA hydratase 2, mitochondrial from Arabidopsis thaliana (Mouse-ear cress).